We begin with the raw amino-acid sequence, 218 residues long: Capsid protein (218 aa).

Methionine 1 carries the N-acetylmethionine; by host modification. Residues 1–28 (MDKSESTSAGRNRRRRPRRGSRSAPSSA) are disordered. Basic residues predominate over residues 11-21 (RNRRRRPRRGS).

Belongs to the cucumovirus capsid protein family.

It is found in the virion. Functionally, capsid protein. Probably binds RNA and plays a role in packaging. The protein is Capsid protein of Cucumis sativus (Cucumber).